The following is a 102-amino-acid chain: Protein YcgL (102 aa).

Residues 14–98 form the YcgL domain; the sequence is MFCVIYRSSK…PPEDLLKQHL (85 aa).

The polypeptide is Protein YcgL (Salmonella agona (strain SL483)).